The following is a 181-amino-acid chain: Lipoprotein signal peptidase (181 aa).

3 helical membrane-spanning segments follow: residues 25 to 45 (LFYKLTMIGFVGFIILLQVFI), 86 to 106 (LVYFLQGLLSVIALVFLVFMV), and 107 to 127 (KYSYIFWITTLAFGSLGNFFD). Residues aspartate 138 and aspartate 153 contribute to the active site. Residues 149 to 169 (FNFADCCITFGFIGLFFCFLI) form a helical membrane-spanning segment.

It belongs to the peptidase A8 family.

The protein resides in the cell membrane. It catalyses the reaction Release of signal peptides from bacterial membrane prolipoproteins. Hydrolyzes -Xaa-Yaa-Zaa-|-(S,diacylglyceryl)Cys-, in which Xaa is hydrophobic (preferably Leu), and Yaa (Ala or Ser) and Zaa (Gly or Ala) have small, neutral side chains.. It participates in protein modification; lipoprotein biosynthesis (signal peptide cleavage). This protein specifically catalyzes the removal of signal peptides from prolipoproteins. This chain is Lipoprotein signal peptidase, found in Mycoplasma genitalium (strain ATCC 33530 / DSM 19775 / NCTC 10195 / G37) (Mycoplasmoides genitalium).